The sequence spans 354 residues: Methionine import ATP-binding protein MetN (354 aa).

Residues 8 to 250 (LDHIDITFHQ…PKEALTQEFI (243 aa)) enclose the ABC transporter domain. ATP is bound at residue 42-49 (GYSGAGKS).

The protein belongs to the ABC transporter superfamily. Methionine importer (TC 3.A.1.24) family. The complex is composed of two ATP-binding proteins (MetN), two transmembrane proteins (MetI) and a solute-binding protein (MetQ).

It is found in the cell membrane. It catalyses the reaction L-methionine(out) + ATP + H2O = L-methionine(in) + ADP + phosphate + H(+). It carries out the reaction D-methionine(out) + ATP + H2O = D-methionine(in) + ADP + phosphate + H(+). Part of the ABC transporter complex MetNIQ involved in methionine import. Responsible for energy coupling to the transport system. In Streptococcus pyogenes serotype M4 (strain MGAS10750), this protein is Methionine import ATP-binding protein MetN.